Consider the following 1671-residue polypeptide: Fatty acid synthase alpha subunit aflA (1671 aa).

The disordered stretch occupies residues Ile-40–Thr-60. The span at Glu-47–Pro-58 shows a compositional bias: pro residues. The 79-residue stretch at Asp-75 to Lys-153 folds into the Carrier domain. The residue at position 113 (Ser-113) is an O-(pantetheine 4'-phosphoryl)serine. Positions Gly-492–Ala-729 are ketoreductase (KR) domain. One can recognise a Ketosynthase family 3 (KS3) domain in the interval Met-926 to Ala-1428. Cys-1113 acts as the For beta-ketoacyl synthase activity in catalysis. Positions Ser-1244–Ser-1270 are enriched in low complexity. The tract at residues Ser-1244 to Thr-1288 is disordered. Residues His-1313 and His-1354 each act as for beta-ketoacyl synthase activity in the active site. Residues Pro-1497–Gly-1521 form a disordered region. Asp-1552 contacts Mg(2+). Residues Asp-1552–Val-1554, Glu-1598–Ser-1608, His-1622–Asn-1625, and Ile-1652–Tyr-1654 contribute to the acetyl-CoA site. Ser-1653 lines the Mg(2+) pocket.

Belongs to the thiolase-like superfamily. Fungal fatty acid synthetase subunit alpha family. In terms of assembly, [Alpha(6)beta(6)] hexamers of two multifunctional subunits (alpha and beta). Post-translationally, 4'-phosphopantetheine is transferred from CoA to a specific serine of the acyl carrier domain by the C-terminal PPT domain. This modification is essential for activity because fatty acids are bound in thioester linkage to the sulfhydryl of the prosthetic group.

It catalyses the reaction acetyl-CoA + n malonyl-CoA + 2n NADPH + 4n H(+) = a long-chain-acyl-CoA + n CoA + n CO2 + 2n NADP(+).. The enzyme catalyses a fatty acyl-[ACP] + malonyl-[ACP] + H(+) = a 3-oxoacyl-[ACP] + holo-[ACP] + CO2. It carries out the reaction a (3R)-hydroxyacyl-[ACP] + NADP(+) = a 3-oxoacyl-[ACP] + NADPH + H(+). It functions in the pathway mycotoxin biosynthesis; aflatoxin biosynthesis. In terms of biological role, fatty acid synthase alpha subunit; part of the gene cluster that mediates the biosynthesis of aflatoxins, a group of polyketide-derived furanocoumarins, and part of the most toxic and carcinogenic compounds among the known mycotoxins. The four major aflatoxins produced by A.parasiticus are aflatoxin B1 (AFB1), aflatoxin B2 (AFB2), aflatoxin G1 (AFG1) and aflatoxin G2 (AFG2). Within the aflatoxin pathway, the fungal fatty acid synthase aflA/aflB provides the hexanoyl starter unit to the acyl-carrier protein (ACP) domain of the norsolorinic acid synthase to allow the first step of the pathway. The biosynthesis of aflatoxins begins with the norsolorinic acid synthase aflC that combines a hexanoyl starter unit produced by the fatty acid synthase aflA/aflB and 7 malonyl-CoA extender units to synthesize the precursor NOR. The second step is the conversion of NOR to averantin (AVN) and requires the norsolorinic acid ketoreductase aflD, which catalyzes the dehydration of norsolorinic acid to form (1'S)-averantin. The norsolorinic acid reductases aflE and aflF may also play a role in the conversion of NOR to AVN. The cytochrome P450 monooxygenase aflG then catalyzes the hydroxylation of AVN to 5'hydroxyaverantin (HAVN). The next step is performed by the 5'-hydroxyaverantin dehydrogenase aflH that transforms HAVN to 5'-oxoaverantin (OAVN) which is further converted to averufin (AVF) by aflK that plays a dual role in the pathway, as a 5'-oxoaverantin cyclase that mediates conversion of 5'-oxoaverantin, as well as a versicolorin B synthase in a later step in the pathway. The averufin oxidase aflI catalyzes the conversion of AVF to versiconal hemiacetal acetate (VHA). VHA is then the substrate for the versiconal hemiacetal acetate esterase aflJ to yield versiconal (VAL). Versicolorin B synthase aflK then converts VAL to versicolorin B (VERB) by closing the bisfuran ring of aflatoxin which is required for DNA-binding, thus giving to aflatoxin its activity as a mutagen. Then, the activity of the versicolorin B desaturase aflL leads to versicolorin A (VERA). A branch point starts from VERB since it can also be converted to dihydrodemethylsterigmatocystin (DMDHST), probably also by aflL, VERA being a precursor for aflatoxins B1 and G1, and DMDHST for aflatoxins B2 and G2. Next, the versicolorin reductase aflM and the cytochrome P450 monooxygenase aflN are involved in conversion of VERA to demethylsterigmatocystin (DMST). AflX and aflY seem also involved in this step, through probable aflX-mediated epoxide ring-opening step following versicolorin A oxidation and aflY-mediated Baeyer-Villiger oxidation required for the formation of the xanthone ring. The methyltransferase aflO then leads to the modification of DMST to sterigmatocystin (ST), and of DMDHST to dihydrosterigmatocystin (DHST). Both ST and DHST are then substrates of the O-methyltransferase aflP to yield O-methylsterigmatocystin (OMST) and dihydro-O-methylsterigmatocystin (DHOMST), respectively. Finally OMST is converted to aflatoxins B1 and G1, and DHOMST to aflatoxins B2 and G2, via the action of several enzymes including O-methylsterigmatocystin oxidoreductase aflQ, the cytochrome P450 monooxygenase aflU, but also the NADH-dependent flavin oxidoreductase nadA which is specifically required for the synthesis of AFG1. This is Fatty acid synthase alpha subunit aflA from Aspergillus parasiticus (strain ATCC 56775 / NRRL 5862 / SRRC 143 / SU-1).